Here is a 423-residue protein sequence, read N- to C-terminus: Glutamate-1-semialdehyde 2,1-aminomutase (423 aa).

An N6-(pyridoxal phosphate)lysine modification is found at Lys-262.

Belongs to the class-III pyridoxal-phosphate-dependent aminotransferase family. HemL subfamily. Homodimer. Pyridoxal 5'-phosphate is required as a cofactor.

It is found in the cytoplasm. It carries out the reaction (S)-4-amino-5-oxopentanoate = 5-aminolevulinate. It functions in the pathway porphyrin-containing compound metabolism; protoporphyrin-IX biosynthesis; 5-aminolevulinate from L-glutamyl-tRNA(Glu): step 2/2. This chain is Glutamate-1-semialdehyde 2,1-aminomutase, found in Campylobacter fetus subsp. fetus (strain 82-40).